The sequence spans 951 residues: Plasma membrane ATPase (951 aa).

The next 4 helical transmembrane spans lie at 61 to 81, 93 to 113, 243 to 263, and 277 to 297; these read FLGF…IMAI, WEDF…SFIE, IGNF…IVMF, and LLVL…SVTM. Asp329 (4-aspartylphosphate intermediate) is an active-site residue. Mg(2+) is bound by residues Asp588 and Asp592. The next 6 helical transmembrane spans lie at 647–667, 671–691, 709–729, 752–772, 785–805, and 814–834; these read IYAV…ALIW, FSPF…MTIS, IFAT…IFFW, EMMS…IFVT, LLLV…AVYA, and GIGW…YFPL.

This sequence belongs to the cation transport ATPase (P-type) (TC 3.A.3) family. Type IIIA subfamily.

Its subcellular location is the cell membrane. It catalyses the reaction ATP + H2O + H(+)(in) = ADP + phosphate + 2 H(+)(out). The plasma membrane ATPase of plants and fungi is a hydrogen ion pump. The proton gradient it generates drives the active transport of nutrients by H(+)-symport. The resulting external acidification and/or internal alkinization may mediate growth responses. The chain is Plasma membrane ATPase from Oryza sativa subsp. japonica (Rice).